Reading from the N-terminus, the 484-residue chain is Synaptic vesicle membrane protein VAT-1 homolog (484 aa).

Composition is skewed to low complexity over residues Met1–Ala13 and Ser40–Glu61. 2 disordered regions span residues Met1–Glu65 and Ile402–Asn484. Residues Pro411 to Asn484 are compositionally biased toward basic and acidic residues.

This sequence belongs to the zinc-containing alcohol dehydrogenase family. Quinone oxidoreductase subfamily.

This chain is Synaptic vesicle membrane protein VAT-1 homolog, found in Danio rerio (Zebrafish).